We begin with the raw amino-acid sequence, 1097 residues long: Transmembrane protein 132D (1097 aa).

Residues 1-30 (MCPSEMGTLWYLWSPVLISLAALFSKVTEG) form the signal peptide. The Extracellular segment spans residues 31-913 (RGILESIQRF…LDQAAKGLSD (883 aa)). Positions 233–245 (DERGDCAKEDSRK) are enriched in basic and acidic residues. The tract at residues 233–263 (DERGDCAKEDSRKSGGTPAGHNDVDESSPPL) is disordered. A helical membrane pass occupies residues 914-934 (LEIGMYALLGVFCLAILVFLI). The Cytoplasmic portion of the chain corresponds to 935–1097 (NCVTFALKYR…SCMERLHEHV (163 aa)). A disordered region spans residues 1021–1042 (MLTDDQEQKSEPPTSPTSKRKR).

This sequence belongs to the TMEM132 family. Expressed in mature oligodendrocytes in the white and gray matter of the brain.

The protein resides in the membrane. Its function is as follows. Regulates neuronal morphology via inhibition of the WAVE regulatory complex (WCR), a complex that controls F-actin cytoskeletal dynamics. This Mus musculus (Mouse) protein is Transmembrane protein 132D (Tmem132d).